The following is a 593-amino-acid chain: Potassium channel KAT6 (593 aa).

At 1-33 the chain is on the cytoplasmic side; the sequence is MAASRSELLRPAFGEPSPSLGPFVVNPHTCSYR. A helical transmembrane segment spans residues 34 to 54; sequence WWQKFLIVLVLYTAWASPFEL. At 55–64 the chain is on the extracellular side; sequence AMEKSASAAL. The helical transmembrane segment at 65-85 threads the bilayer; the sequence is AVTELVVDAFFAVDIAVSFFV. Topologically, residues 86–106 are cytoplasmic; it reads AYRDASTGLLVTDRKKIATRH. Residues 107–129 form a helical membrane-spanning segment; sequence LARPCLALDVASTIPLQMIYRIV. The Extracellular portion of the chain corresponds to 130-138; it reads SGKRQALYG. The chain crosses the membrane as a helical; Voltage-sensor span at residues 139–159; the sequence is LLNLLRLWRLRRVSKLFARLE. The Cytoplasmic segment spans residues 160–173; the sequence is KDIRFSYLWTRLIK. A helical transmembrane segment spans residues 174-194; the sequence is LLYVTLFAVHFASCIYLWMAF. The Extracellular segment spans residues 195–221; sequence HHKAKELTWIGSQFHGFEDRSVWFCYT. The segment at residues 222-241 is an intramembrane region (pore-forming); that stretch reads CAVYWSITTLATVGYGDLHA. At 242 to 247 the chain is on the extracellular side; the sequence is ANTGEM. Residues 248–268 traverse the membrane as a helical segment; that stretch reads LFSIAFMLFNMGLTSYIIGNI. At 269 to 593 the chain is on the cytoplasmic side; that stretch reads TNLVVHETTN…RDGDHLFFSW (325 aa). 350-470 is a binding site for a nucleoside 3',5'-cyclic phosphate; the sequence is LFQGVSDKLV…VVVFSNFVLY (121 aa). In terms of domain architecture, KHA spans 522 to 593; sequence RVSIHEHLLN…RDGDHLFFSW (72 aa).

This sequence belongs to the potassium channel family. Plant (TC 1.A.1.4) subfamily.

Its subcellular location is the membrane. In terms of biological role, probable inward-rectifying potassium channel. Assuming opened or closed conformations in response to the voltage difference across the membrane, the channel is activated by hyperpolarization. This chain is Potassium channel KAT6, found in Oryza sativa subsp. japonica (Rice).